The chain runs to 138 residues: Large ribosomal subunit protein bL19 (138 aa).

This sequence belongs to the bacterial ribosomal protein bL19 family.

Its function is as follows. This protein is located at the 30S-50S ribosomal subunit interface and may play a role in the structure and function of the aminoacyl-tRNA binding site. The chain is Large ribosomal subunit protein bL19 from Rickettsia massiliae (strain Mtu5).